Here is a 484-residue protein sequence, read N- to C-terminus: ATP synthase subunit beta (484 aa).

The disordered stretch occupies residues glutamate 104 to phenylalanine 123. Glycine 156–threonine 163 is a binding site for ATP.

It belongs to the ATPase alpha/beta chains family. F-type ATPases have 2 components, CF(1) - the catalytic core - and CF(0) - the membrane proton channel. CF(1) has five subunits: alpha(3), beta(3), gamma(1), delta(1), epsilon(1). CF(0) has three main subunits: a(1), b(2) and c(9-12). The alpha and beta chains form an alternating ring which encloses part of the gamma chain. CF(1) is attached to CF(0) by a central stalk formed by the gamma and epsilon chains, while a peripheral stalk is formed by the delta and b chains.

Its subcellular location is the cell inner membrane. It catalyses the reaction ATP + H2O + 4 H(+)(in) = ADP + phosphate + 5 H(+)(out). In terms of biological role, produces ATP from ADP in the presence of a proton gradient across the membrane. The catalytic sites are hosted primarily by the beta subunits. This Zymomonas mobilis subsp. mobilis (strain ATCC 31821 / ZM4 / CP4) protein is ATP synthase subunit beta.